Consider the following 104-residue polypeptide: DNA-directed RNA polymerase subunit Rpo13 (104 aa).

2 disordered regions span residues 1-33 and 78-104; these read MVSG…EDEF and RDSR…SVEG. Positions 7 to 31 are enriched in acidic residues; it reads TDEEKEGTSDEEVNEEKEVEETSED. Residues 80-104 are compositionally biased toward basic residues; it reads SRRKAKKAVSKKVKKTKKKEKSVEG.

The protein belongs to the archaeal Rpo13 RNA polymerase subunit family. In terms of assembly, part of the 13-subunit RNA polymerase complex.

Its subcellular location is the cytoplasm. It carries out the reaction RNA(n) + a ribonucleoside 5'-triphosphate = RNA(n+1) + diphosphate. Its function is as follows. DNA-dependent RNA polymerase (RNAP) catalyzes the transcription of DNA into RNA using the four ribonucleoside triphosphates as substrates. Probably binds dsDNA. This is DNA-directed RNA polymerase subunit Rpo13 from Saccharolobus solfataricus (strain ATCC 35092 / DSM 1617 / JCM 11322 / P2) (Sulfolobus solfataricus).